Consider the following 1085-residue polypeptide: DNA-directed RNA polymerase subunit beta (1085 aa).

The protein belongs to the RNA polymerase beta chain family. As to quaternary structure, in plastids the minimal PEP RNA polymerase catalytic core is composed of four subunits: alpha, beta, beta', and beta''. When a (nuclear-encoded) sigma factor is associated with the core the holoenzyme is formed, which can initiate transcription.

It localises to the plastid. It is found in the chloroplast. It catalyses the reaction RNA(n) + a ribonucleoside 5'-triphosphate = RNA(n+1) + diphosphate. Its function is as follows. DNA-dependent RNA polymerase catalyzes the transcription of DNA into RNA using the four ribonucleoside triphosphates as substrates. The protein is DNA-directed RNA polymerase subunit beta of Physcomitrium patens (Spreading-leaved earth moss).